The primary structure comprises 309 residues: Thermolabile glutaminase (309 aa).

7 residues coordinate substrate: serine 64, asparagine 114, glutamate 160, asparagine 167, tyrosine 191, tyrosine 243, and valine 261.

This sequence belongs to the glutaminase family. Homotetramer.

It catalyses the reaction L-glutamine + H2O = L-glutamate + NH4(+). The sequence is that of Thermolabile glutaminase (glsA) from Rhizobium etli (strain ATCC 51251 / DSM 11541 / JCM 21823 / NBRC 15573 / CFN 42).